A 292-amino-acid polypeptide reads, in one-letter code: ATP synthase subunit a (292 aa).

The next 7 helical transmembrane spans lie at 39–59, 73–93, 102–122, 128–148, 172–192, 196–216, and 231–251; these read QILG…FYKL, FLLL…DLLG, YFLM…LGGI, SLTF…VMGI, TFIP…SISL, GNIL…IFIF, and VFAG…AGVL.

It belongs to the ATPase A chain family. As to quaternary structure, F-type ATPases have 2 components, CF(1) - the catalytic core - and CF(0) - the membrane proton channel. CF(1) has five subunits: alpha(3), beta(3), gamma(1), delta(1), epsilon(1). CF(0) has three main subunits: a(1), b(2) and c(9-12). The alpha and beta chains form an alternating ring which encloses part of the gamma chain. CF(1) is attached to CF(0) by a central stalk formed by the gamma and epsilon chains, while a peripheral stalk is formed by the delta and b chains.

It localises to the cell membrane. Its function is as follows. Key component of the proton channel; it plays a direct role in the translocation of protons across the membrane. The sequence is that of ATP synthase subunit a from Mycoplasma genitalium (strain ATCC 33530 / DSM 19775 / NCTC 10195 / G37) (Mycoplasmoides genitalium).